The primary structure comprises 176 residues: ATP-dependent protease subunit HslV (176 aa).

The active site involves Thr2. Na(+)-binding residues include Gly157, Cys160, and Thr163.

Belongs to the peptidase T1B family. HslV subfamily. As to quaternary structure, a double ring-shaped homohexamer of HslV is capped on each side by a ring-shaped HslU homohexamer. The assembly of the HslU/HslV complex is dependent on binding of ATP.

It localises to the cytoplasm. It catalyses the reaction ATP-dependent cleavage of peptide bonds with broad specificity.. Its activity is regulated as follows. Allosterically activated by HslU binding. In terms of biological role, protease subunit of a proteasome-like degradation complex believed to be a general protein degrading machinery. The polypeptide is ATP-dependent protease subunit HslV (Klebsiella pneumoniae (strain 342)).